A 356-amino-acid polypeptide reads, in one-letter code: Arginine kinase 1 (356 aa).

The Phosphagen kinase N-terminal domain occupies 6–91 (VLAKLEEGYA…FDPIIEDYHG (86 aa)). A substrate-binding site is contributed by 64 to 68 (GVGIY). Residues 119–356 (YVISTRVRCG…TELIKLEKSL (238 aa)) enclose the Phosphagen kinase C-terminal domain. ATP contacts are provided by residues 122–126 (STRVR) and H185. Residue E225 coordinates substrate. Position 229 (R229) interacts with ATP. Residue C271 participates in substrate binding. ATP-binding positions include 280–284 (RASVH) and 309–314 (RGTRGE). Residue E314 participates in substrate binding.

The protein belongs to the ATP:guanido phosphotransferase family.

It catalyses the reaction L-arginine + ATP = N(omega)-phospho-L-arginine + ADP + H(+). This chain is Arginine kinase 1, found in Drosophila melanogaster (Fruit fly).